The chain runs to 238 residues: Chloride intracellular channel exl-1 (238 aa).

The protein belongs to the chloride channel CLIC family. As to expression, expressed in the intestine, neurons and muscles.

The protein localises to the cytoplasm. It localises to the membrane. Its subcellular location is the lysosome membrane. The protein resides in the golgi apparatus membrane. In terms of biological role, probable chloride channel. This Caenorhabditis elegans protein is Chloride intracellular channel exl-1 (exl-1).